A 307-amino-acid polypeptide reads, in one-letter code: Ornithine carbamoyltransferase (307 aa).

Residues 51-54, Q78, R102, and 129-132 each bind carbamoyl phosphate; these read STRT and HPVQ. Residues N159, D223, and 227-228 contribute to the L-ornithine site; that span reads SM. Residues 263–264 and R291 contribute to the carbamoyl phosphate site; that span reads CL.

It belongs to the aspartate/ornithine carbamoyltransferase superfamily. OTCase family.

Its subcellular location is the cytoplasm. The catalysed reaction is carbamoyl phosphate + L-ornithine = L-citrulline + phosphate + H(+). It participates in amino-acid biosynthesis; L-arginine biosynthesis; L-arginine from L-ornithine and carbamoyl phosphate: step 1/3. Functionally, reversibly catalyzes the transfer of the carbamoyl group from carbamoyl phosphate (CP) to the N(epsilon) atom of ornithine (ORN) to produce L-citrulline. The polypeptide is Ornithine carbamoyltransferase (Wolinella succinogenes (strain ATCC 29543 / DSM 1740 / CCUG 13145 / JCM 31913 / LMG 7466 / NCTC 11488 / FDC 602W) (Vibrio succinogenes)).